The following is a 376-amino-acid chain: MAVSKFVQIRRDLHKIPEIGFKEWKTQQYILDYIGTLSNEHVEVKVWRTGVIVKVKGKNPEKVIGYRADIDGLPITEETGYEFASVHEGMMHACGHDLHTTIGLGLLTAAVTERIDDDLVFLFQPAEEGPGGALPMLESEELKEWKPNIILGLHIAPEYPVGTIATKEGLLFANTSELYVDLKGKGGHAAYPHTANDMIVAASHLVTQLQSVISRNVNPLDSAVITIGKITGGTVQNIIAEKSRLEGTIRTLSVESMSRVKSRIEAIVAGIEASFQCEAVIDYGAMYHQVYNHEALTREFMQFVSEQTDMKVITCTEAMTGEDFGYMLQEIPGFMFWLGVNSEYGLHHAKLRPDEEAIEKAIVFLDQYVKWKGTRK.

D69 is an active-site residue. E128 acts as the Proton acceptor in catalysis.

The protein belongs to the peptidase M20A family. N-acetyldiaminopimelate deacetylase subfamily.

It catalyses the reaction N-acetyl-(2S,6S)-2,6-diaminopimelate + H2O = (2S,6S)-2,6-diaminopimelate + acetate. It participates in amino-acid biosynthesis; L-lysine biosynthesis via DAP pathway; LL-2,6-diaminopimelate from (S)-tetrahydrodipicolinate (acetylase route): step 3/3. In terms of biological role, catalyzes the conversion of N-acetyl-diaminopimelate to diaminopimelate and acetate. This is N-acetyldiaminopimelate deacetylase from Bacillus anthracis (strain A0248).